Here is a 61-residue protein sequence, read N- to C-terminus: UPF0391 membrane protein Pnap_0032 (61 aa).

A run of 2 helical transmembrane segments spans residues 5 to 25 (AIIFAVISLIAGALGFSGVAA) and 33 to 53 (VLFGLFLILAVIFIVLAALGV).

It belongs to the UPF0391 family.

Its subcellular location is the cell membrane. The sequence is that of UPF0391 membrane protein Pnap_0032 from Polaromonas naphthalenivorans (strain CJ2).